Here is a 1009-residue protein sequence, read N- to C-terminus: Chitin synthase 2 (1009 aa).

2 stretches are compositionally biased toward polar residues: residues 1–12 (MSYNNPNNSNSH) and 34–62 (EFLNQRSNTPLTQGTYNYHNTSTNSLNFQ). Disordered regions lie at residues 1–62 (MSYN…LNFQ) and 175–234 (DESQ…EVRS). The segment covering 192-202 (EGEEEEEEGET) has biased composition (acidic residues). The next 7 helical transmembrane spans lie at 647–667 (WLNGSFFAAIYSLVHFYKVWT), 682–702 (FFYQLINLIVSWFSIGSYFLV), 722–742 (ILSVIFLWLYLASIVTTFVLS), 757–777 (IVIFFAILMAYMIFAAIFMAV), 804–823 (LVVATSSTYALYFLASFLYF), 930–950 (VLVWMFTNFVVIALVLETGGF), and 967–987 (AAVFLTVILWTVAFMALFRFI).

Belongs to the chitin synthase family.

The protein localises to the cell membrane. The catalysed reaction is [(1-&gt;4)-N-acetyl-beta-D-glucosaminyl](n) + UDP-N-acetyl-alpha-D-glucosamine = [(1-&gt;4)-N-acetyl-beta-D-glucosaminyl](n+1) + UDP + H(+). Polymerizes chitin, a structural polymer of the cell wall and septum, by transferring the sugar moiety of UDP-GlcNAc to the non-reducing end of the growing chitin polymer. This is Chitin synthase 2 (CHS2) from Candida albicans (Yeast).